Consider the following 905-residue polypeptide: Clumping factor B (905 aa).

The signal sequence occupies residues 1-44 (MKKRIDYLSNKQNKYSIRRFTVGTTSVIVGATILFGIGNHQAQA). The short motif at 15–26 (YSIRRFTVGTTS) is the YSIRK-G/S signaling motif element. 2 stretches are compositionally biased toward polar residues: residues 44-61 (ASEQ…NASA) and 68-101 (MIET…KPMS). Positions 44–191 (ASEQSNDTTQ…AQGTSKPSVR (148 aa)) are disordered. Residues 45 to 542 (SEQSNDTTQS…GSADGDSAVN (498 aa)) are ligand binding A region. Residues 102–119 (TQTSNTTTTEPASTNETP) are compositionally biased toward low complexity. Positions 134–189 (QDQTVPQEANSQVDNKTTNDANSIATNSELKNPQTLDLPQSSPQTISNAQGTSKPS) are enriched in polar residues. An MIDAS-like motif motif is present at residues 272 to 276 (DYSNS). The segment at 530–877 (YGGGSADGDS…ETGDKSENTN (348 aa)) is disordered. A compositionally biased stretch (pro residues) spans 545 to 555 (DPTPGPPVDPE). Over residues 556–829 (PSPDPEPEPS…SDSDSDSDSD (274 aa)) the composition is skewed to acidic residues. Over residues 833 to 844 (RVTPPNNEQKAP) the composition is skewed to polar residues. Positions 861–874 (HKTDALPETGDKSE) are enriched in basic and acidic residues. Positions 866-870 (LPETG) match the LPXTG sorting signal motif. A Pentaglycyl murein peptidoglycan amidated threonine modification is found at Thr-869. Positions 870–905 (GDKSENTNATLFGAMMALLGSLLLFRKRKQDHKEKA) are cleaved as a propeptide — removed by sortase.

This sequence belongs to the serine-aspartate repeat-containing protein (SDr) family. Proteolytically cleaved by aureolysin (aur). This cleavage leads to the inactivation of ClfB.

It localises to the secreted. The protein localises to the cell wall. In terms of biological role, cell surface-associated protein implicated in virulence by promoting bacterial attachment to both alpha- and beta-chains of human fibrinogen and inducing the formation of bacterial clumps. In Staphylococcus aureus (strain MSSA476), this protein is Clumping factor B (clfB).